The following is a 271-amino-acid chain: Putative phosphoenolpyruvate synthase regulatory protein (271 aa).

Residue 152-159 coordinates ADP; sequence GVSRCGKT.

It belongs to the pyruvate, phosphate/water dikinase regulatory protein family. PSRP subfamily.

It catalyses the reaction [pyruvate, water dikinase] + ADP = [pyruvate, water dikinase]-phosphate + AMP + H(+). The catalysed reaction is [pyruvate, water dikinase]-phosphate + phosphate + H(+) = [pyruvate, water dikinase] + diphosphate. In terms of biological role, bifunctional serine/threonine kinase and phosphorylase involved in the regulation of the phosphoenolpyruvate synthase (PEPS) by catalyzing its phosphorylation/dephosphorylation. The polypeptide is Putative phosphoenolpyruvate synthase regulatory protein (Legionella pneumophila (strain Lens)).